A 317-amino-acid polypeptide reads, in one-letter code: Protein CbxX, chromosomal (317 aa).

Residues 1-21 (MSAPETTAPLQPPAAPAASLP) form a disordered region. ATP is bound at residue 85–92 (GNPGTGKT).

Belongs to the CbxX/CfxQ family.

In terms of biological role, seems to be necessary for the expression of RuBisCO. The protein is Protein CbxX, chromosomal (cbxXC) of Cupriavidus necator (strain ATCC 17699 / DSM 428 / KCTC 22496 / NCIMB 10442 / H16 / Stanier 337) (Ralstonia eutropha).